Consider the following 272-residue polypeptide: Ribosome maturation factor RimP (272 aa).

Positions 209 to 272 (QNLGILPPPP…RGDIDPPEGD (64 aa)) are disordered. A compositionally biased stretch (basic and acidic residues) spans 250 to 266 (NTKEHRLAAERLRRGDI).

Belongs to the RimP family.

The protein localises to the cytoplasm. Its function is as follows. Required for maturation of 30S ribosomal subunits. The polypeptide is Ribosome maturation factor RimP (Rhodopseudomonas palustris (strain BisA53)).